A 1533-amino-acid chain; its full sequence is Maternal protein pumilio (1533 aa).

Disordered stretches follow at residues 102-149 (ACGD…TIGM), 207-276 (AAAV…QQHP), 304-331 (YDHHGGAMHPGMNGGMPKQQPLGPPGAG), and 382-452 (WEKS…AGIL). Basic and acidic residues predominate over residues 103 to 117 (CGDDGHGIDNPDKWK). Positions 133 to 149 (PGNGSNGGPGAIGTIGM) are enriched in gly residues. Low complexity predominate over residues 207-237 (AAAVAAQQQHQHPHQQHPQQQQQQQQAQNQG). Residues 243 to 255 (MGGGNGLGNGNGL) are compositionally biased toward gly residues. The span at 256–276 (GIQHPGQQQQQQQQQQQQQHP) shows a compositional bias: low complexity. Phosphoserine is present on residues Ser453, Ser468, Ser470, and Ser477. Residues 470-479 (SPTNKDSSLS) show a composition bias toward polar residues. Disordered regions lie at residues 470–558 (SPTN…NLLF), 697–725 (VGAPPVPNGSLQQSQQQQQQQQQQQQQQQ), 846–912 (VLVP…AFSP), and 975–1008 (LGAPITPPPSAQSCLLGSRAPGAESRQRQQQQQQ). Basic and acidic residues predominate over residues 483–503 (PHLRNLKFDDNDKSRDDKEKA). At Ser505 the chain carries Phosphoserine. Low complexity predominate over residues 863 to 875 (PQLYQPQPQTAQQ). Positions 1091–1428 (GRSRLLEDFR…HINAKLEKYY (338 aa)) constitute a PUM-HD domain. 8 Pumilio repeats span residues 1111–1146 (DLANHIVEFSQDQHGSRFIQQKLERATAAEKQMVFS), 1147–1182 (EILAAAYSLMTDVFGNYVIQKFFEFGTPEQKNTLGM), 1183–1218 (QVKGHVLQLALQMYGCRVIQKALESISPEQQQEIVH), 1219–1254 (ELDGHVLKCVKDQNGNHVVQKCIECVDPVALQFIIN), 1255–1290 (AFKGQVYSLSTHPYGCRVIQRILEHCTAEQTTPILD), 1291–1326 (ELHEHTEQLIQDQYGNYVIQHVLEHGKQEDKSILIN), 1327–1362 (SVRGKVLVLSQHKFASNVVEKCVTHATRGERTGLID), and 1366–1402 (TFNDNALHVMMKDQYANYVVQKMIDVSEPTQLKKLMT). The segment at 1126–1130 (SRFIQ) is adenine-nucleotide binding in RNA target. Residues 1162–1166 (NYVIQ) form a uracil-nucleotide binding in RNA target region. Residues 1198 to 1202 (CRVIQ) are adenine-nucleotide binding in RNA target. The segment at 1234–1238 (NHVVQ) is non-specific-nucleotide binding in RNA target. Residues 1270-1274 (CRVIQ) form an adenine-nucleotide binding in RNA target region. Residues 1306-1310 (NYVIQ) are uracil-nucleotide binding in RNA target. A guanine-nucleotide binding in RNA target region spans residues 1342 to 1346 (SNVVE). Residues 1382 to 1386 (NYVVQ) form a uracil-nucleotide binding in RNA target region. The segment at 1494 to 1533 (AMVVEPSSPDASESSSSVVSGAVNSSLGPIGPPTNGNVVL) is disordered. Residues 1496–1519 (VVEPSSPDASESSSSVVSGAVNSS) show a composition bias toward low complexity.

Interacts with nanos (nos) and brat. Acts via the formation of a quaternary complex composed of pum, nanos, brat and the 3'-UTR mRNA of hb.

It localises to the cytoplasm. The protein localises to the cytoplasmic ribonucleoprotein granule. Functionally, sequence-specific RNA-binding protein that acts as a post-transcriptional repressor by binding the 3'-UTR of mRNA targets. Binds to an RNA consensus sequence, the Pumilio Response Element (PRE), 5'-UGUANAUA-3', that is related to the Nanos Response Element (NRE). Mediates post-transcriptional repression of transcripts via different mechanisms: acts via direct recruitment of deadenylase complexes leading to translational inhibition and mRNA degradation. Also mediates deadenylation-independent repression by promoting accessibility of miRNAs. Mediates post-transcriptional silencing of E2f mRNA by binding to its 3'-UTR and promoting miRNA regulation. Required for abdominal development and to support proliferation and self-renewal of germ cells. Pum is the only gene required for nanos (nos) activity that is not also required for posterior localization of germline determinants. Pum is required during embryogenesis when nanos activity apparently moves anteriorly from the posterior pole. The protein is Maternal protein pumilio (pum) of Drosophila melanogaster (Fruit fly).